A 306-amino-acid polypeptide reads, in one-letter code: Pantothenate kinase (306 aa).

91-98 (GSVAVGKS) is a binding site for ATP.

This sequence belongs to the prokaryotic pantothenate kinase family.

The protein localises to the cytoplasm. The catalysed reaction is (R)-pantothenate + ATP = (R)-4'-phosphopantothenate + ADP + H(+). It functions in the pathway cofactor biosynthesis; coenzyme A biosynthesis; CoA from (R)-pantothenate: step 1/5. The protein is Pantothenate kinase of Streptococcus pyogenes serotype M49 (strain NZ131).